We begin with the raw amino-acid sequence, 88 residues long: uncharacterized protein (88 aa).

This is an uncharacterized protein from Haloarcula hispanica (His1V).